Consider the following 204-residue polypeptide: Rho GDP-dissociation inhibitor 1 (204 aa).

Positions 1–36 (MAEQEPTAEQLAQIAAENEEDEHSVNYKPPAQKSIQ) are disordered. N-acetylalanine is present on Ala2. Position 34 is a phosphoserine (Ser34). At Lys43 the chain carries N6-acetyllysine. A Phosphoserine modification is found at Ser47. Lys105 and Lys127 each carry N6-acetyllysine. Residues Lys138 and Lys141 each participate in a glycyl lysine isopeptide (Lys-Gly) (interchain with G-Cter in SUMO1); alternate cross-link. Glycyl lysine isopeptide (Lys-Gly) (interchain with G-Cter in SUMO2); alternate cross-links involve residues Lys138 and Lys141. Position 141 is an N6-acetyllysine; alternate (Lys141). Lys141 carries the post-translational modification N6-succinyllysine; alternate. Residue Lys178 is modified to N6-acetyllysine.

Belongs to the Rho GDI family. In terms of assembly, monomer. Interacts with FER. Interacts with PLXNB3. Forms a heterodimer with RAC1. Interacts with RHOA, the affinity is increased by three orders of magnitude when RHOA is prenylated. Interacts with PSMD10; the interaction increases ARHGDIA association with RHOA, leading to ARHGDIA-mediated inactivation of RHOA and ROCK and prolonged AKT activation. Interacts with KANK2; the interaction is direct and may regulate the interaction of ARHGDIA with RHOA, RAC1 and CDC42. Interacts with RHOC. Interacts with CDC42. Interacts with NGFR (via death domain); NGFR binding decreases the affinity for RHOA.

Its subcellular location is the cytoplasm. In terms of biological role, controls Rho proteins homeostasis. Regulates the GDP/GTP exchange reaction of the Rho proteins by inhibiting the dissociation of GDP from them, and the subsequent binding of GTP to them. Retains Rho proteins such as CDC42, RAC1 and RHOA in an inactive cytosolic pool, regulating their stability and protecting them from degradation. Actively involved in the recycling and distribution of activated Rho GTPases in the cell, mediates extraction from membranes of both inactive and activated molecules due its exceptionally high affinity for prenylated forms. Through the modulation of Rho proteins, may play a role in cell motility regulation. In glioma cells, inhibits cell migration and invasion by mediating the signals of SEMA5A and PLXNB3 that lead to inactivation of RAC1. This chain is Rho GDP-dissociation inhibitor 1 (ARHGDIA), found in Homo sapiens (Human).